The primary structure comprises 64 residues: Large ribosomal subunit protein uL29 (64 aa).

The protein belongs to the universal ribosomal protein uL29 family.

This chain is Large ribosomal subunit protein uL29, found in Cupriavidus necator (strain ATCC 17699 / DSM 428 / KCTC 22496 / NCIMB 10442 / H16 / Stanier 337) (Ralstonia eutropha).